The following is a 275-amino-acid chain: tRNA (guanine-N(7)-)-methyltransferase (275 aa).

The tract at residues 1-73 is disordered; the sequence is MRHHGRMHAR…GGQQDTWERL (73 aa). Residues 46 to 59 are compositionally biased toward basic residues; it reads AHRHRRVTSFRSRR. Glu-107, Glu-132, Asp-159, and Asp-182 together coordinate S-adenosyl-L-methionine. Asp-182 is a catalytic residue. Substrate-binding positions include Lys-186, Asp-218, and 254–257; that span reads TKYE.

Belongs to the class I-like SAM-binding methyltransferase superfamily. TrmB family.

It catalyses the reaction guanosine(46) in tRNA + S-adenosyl-L-methionine = N(7)-methylguanosine(46) in tRNA + S-adenosyl-L-homocysteine. It participates in tRNA modification; N(7)-methylguanine-tRNA biosynthesis. Its function is as follows. Catalyzes the formation of N(7)-methylguanine at position 46 (m7G46) in tRNA. In Mycobacterium sp. (strain KMS), this protein is tRNA (guanine-N(7)-)-methyltransferase.